The chain runs to 741 residues: Zinc finger and BTB domain-containing protein 20 (741 aa).

Over residues 1 to 17 (MLERKKPKTAENQKASE) the composition is skewed to basic and acidic residues. Residues 1 to 28 (MLERKKPKTAENQKASEENEITQPGGSS) form a disordered region. The BTB domain occupies 104 to 167 (CDVTVRIHGS…MYSGVLRVSQ (64 aa)). Positions 203–235 (GIQDSGQDTPRGTPESGTSGQSSDTESGYLQSH) are disordered. Polar residues predominate over residues 206–235 (DSGQDTPRGTPESGTSGQSSDTESGYLQSH). The residue at position 211 (Thr211) is a Phosphothreonine. A Glycyl lysine isopeptide (Lys-Gly) (interchain with G-Cter in SUMO1); alternate cross-link involves residue Lys330. Residue Lys330 forms a Glycyl lysine isopeptide (Lys-Gly) (interchain with G-Cter in SUMO2); alternate linkage. The tract at residues 350 to 440 (RNESEECTED…SSPERSNESE (91 aa)) is disordered. Ser353 carries the post-translational modification Phosphoserine. Over residues 354-367 (EECTEDTDQAEGTE) the composition is skewed to acidic residues. Thr357 carries the post-translational modification Phosphothreonine. Lys371 is covalently cross-linked (Glycyl lysine isopeptide (Lys-Gly) (interchain with G-Cter in SUMO2)). A compositionally biased stretch (low complexity) spans 404-423 (AEPAQPEQAAEAPAESSAQP). 4 consecutive C2H2-type zinc fingers follow at residues 578-600 (YECT…MFVH), 606-628 (HQCS…MVTH), 634-656 (YQCS…MRLH), and 662-684 (YECY…VALH). Phosphothreonine occurs at positions 690 and 695. A C2H2-type 5 zinc finger spans residues 715 to 737 (YVCSVCPAKFDQIEQFNDHMRMH). Lys723 participates in a covalent cross-link: Glycyl lysine isopeptide (Lys-Gly) (interchain with G-Cter in SUMO2).

Can homodimerize. Binds to DNA. Post-translationally, sumoylated with SUMO1. In terms of tissue distribution, specifically expressed in early hippocampal neurons, cerebellar granule cells and gliogenic progenitors as well as in differentiated glia. Expressed in adult and aged myogenic satellite cells.

The protein resides in the nucleus. Its function is as follows. May be a transcription factor that may be involved in hematopoiesis, oncogenesis, and immune responses. Plays a role in postnatal myogenesis, may be involved in the regulation of satellite cells self-renewal. The polypeptide is Zinc finger and BTB domain-containing protein 20 (Zbtb20) (Mus musculus (Mouse)).